Here is a 213-residue protein sequence, read N- to C-terminus: tRNA (guanine-N(7)-)-methyltransferase (213 aa).

Glutamate 38, glutamate 63, aspartate 91, and aspartate 113 together coordinate S-adenosyl-L-methionine. The active site involves aspartate 113. Substrate is bound by residues lysine 117, aspartate 149, and 192–195; that span reads TEYE.

This sequence belongs to the class I-like SAM-binding methyltransferase superfamily. TrmB family.

It carries out the reaction guanosine(46) in tRNA + S-adenosyl-L-methionine = N(7)-methylguanosine(46) in tRNA + S-adenosyl-L-homocysteine. It functions in the pathway tRNA modification; N(7)-methylguanine-tRNA biosynthesis. Functionally, catalyzes the formation of N(7)-methylguanine at position 46 (m7G46) in tRNA. The protein is tRNA (guanine-N(7)-)-methyltransferase of Mycoplasmoides gallisepticum (strain R(low / passage 15 / clone 2)) (Mycoplasma gallisepticum).